Consider the following 289-residue polypeptide: Thioredoxin-like protein 1 (289 aa).

The region spanning 2–109 is the Thioredoxin domain; the sequence is VGVKPVGSDP…EEKIKQHLEN (108 aa). Cysteine 34 and cysteine 37 are disulfide-bonded. At serine 113 the chain carries Phosphoserine. In terms of domain architecture, PITH spans 115–285; sequence EDTDIPKGYM…NDFKRVVGKK (171 aa).

Component of the 19S regulatory cap of the 26S proteasome. Interacts with PSMD14/RPN11. Interacts with, and reduces EEF1A1. Ubiquitous.

The protein localises to the cytoplasm. It is found in the nucleus. In terms of biological role, active thioredoxin with a redox potential of about -250 mV. In Homo sapiens (Human), this protein is Thioredoxin-like protein 1 (TXNL1).